A 281-amino-acid chain; its full sequence is Ribosomal RNA small subunit methyltransferase A (281 aa).

6 residues coordinate S-adenosyl-L-methionine: N24, L26, G51, E72, D96, and N123.

The protein belongs to the class I-like SAM-binding methyltransferase superfamily. rRNA adenine N(6)-methyltransferase family. RsmA subfamily.

It is found in the cytoplasm. It carries out the reaction adenosine(1518)/adenosine(1519) in 16S rRNA + 4 S-adenosyl-L-methionine = N(6)-dimethyladenosine(1518)/N(6)-dimethyladenosine(1519) in 16S rRNA + 4 S-adenosyl-L-homocysteine + 4 H(+). Specifically dimethylates two adjacent adenosines (A1518 and A1519) in the loop of a conserved hairpin near the 3'-end of 16S rRNA in the 30S particle. May play a critical role in biogenesis of 30S subunits. In Ureaplasma urealyticum serovar 10 (strain ATCC 33699 / Western), this protein is Ribosomal RNA small subunit methyltransferase A.